We begin with the raw amino-acid sequence, 269 residues long: JmjC domain-containing protein 8 (269 aa).

The N-terminal stretch at 1–24 (MAAAGRFGLLLLIVLWTMVTVVLP) is a signal peptide. N-linked (GlcNAc...) asparagine glycosylation is found at asparagine 135, asparagine 145, and asparagine 214. The JmjC domain maps to 147-269 (TEWAPLFQHY…TSVFISTFLG (123 aa)).

Oligomer. Dimer. Interacts with PKM; regulates angiogenesis and metabolism. In terms of processing, N-glycosylated.

It is found in the endoplasmic reticulum lumen. The protein resides in the cytoplasm. Its function is as follows. Functions as a positive regulator of TNF-induced NF-kappaB signaling. Regulates angiogenesis and cellular metabolism through interaction with PKM. The sequence is that of JmjC domain-containing protein 8 from Rattus norvegicus (Rat).